A 520-amino-acid polypeptide reads, in one-letter code: Versicolorin B desaturase (520 aa).

A helical transmembrane segment spans residues Ile22–Ile42. Residues Asn266 and Asn426 are each glycosylated (N-linked (GlcNAc...) asparagine). Cys462 provides a ligand contact to heme.

Belongs to the cytochrome P450 family. Heme serves as cofactor.

Its subcellular location is the membrane. It catalyses the reaction versicolorin B + NADPH + O2 + H(+) = versicolorin A + NADP(+) + 2 H2O. It participates in mycotoxin biosynthesis. In terms of biological role, versicolorin B desaturase; part of the fragmented gene cluster that mediates the biosynthesis of dothistromin (DOTH), a polyketide toxin very similar in structure to the aflatoxin precursor, versicolorin B. The first step of the pathway is the conversion of acetate to norsolorinic acid (NOR) and requires the fatty acid synthase subunits hexA and hexB, as well as the polyketide synthase pksA. PksA combines a hexanoyl starter unit and 7 malonyl-CoA extender units to synthesize the precursor NOR. The hexanoyl starter unit is provided to the acyl-carrier protein (ACP) domain by the fungal fatty acid synthase hexA/hexB. The second step is the conversion of NOR to averantin (AVN) and requires the norsolorinic acid ketoreductase nor1, which catalyzes the dehydration of norsolorinic acid to form (1'S)-averantin. The cytochrome P450 monooxygenase avnA then catalyzes the hydroxylation of AVN to 5'hydroxyaverantin (HAVN). The next step is performed by adhA that transforms HAVN to averufin (AVF). Averufin might then be converted to hydroxyversicolorone by cypX and avfA. Hydroxyversicolorone is further converted versiconal hemiacetal acetate (VHA) by moxY. VHA is then the substrate for the versiconal hemiacetal acetate esterase est1 to yield versiconal (VAL). Versicolorin B synthase vbsA then converts VAL to versicolorin B (VERB) by closing the bisfuran ring. Then, the activity of the versicolorin B desaturase verB leads to versicolorin A (VERA). DotB, a predicted chloroperoxidase, may perform epoxidation of the A-ring of VERA. Alternatively, a cytochrome P450, such as cypX or avnA could catalyze this step. It is also possible that another, uncharacterized, cytochrome P450 enzyme is responsible for this step. Opening of the epoxide could potentially be achieved by the epoxide hydrolase epoA. However, epoA seems not to be required for DOTH biosynthesis, but other epoxide hydrolases may have the ability to complement this hydrolysis. Alternatively, opening of the epoxide ring could be achieved non-enzymatically. The next step is the deoxygenation of ring A to yield the 5,8-dihydroxyanthraquinone which is most likely catalyzed by the NADPH dehydrogenase encoded by ver1. The last stages of DOTH biosynthesis are proposed to involve hydroxylation of the bisfuran. OrdB and norB might have oxidative roles here. An alternative possibility is that cytochrome P450 monoogenases such as avnA and cypX might perform these steps in addition to previously proposed steps. The chain is Versicolorin B desaturase from Dothistroma septosporum (strain NZE10 / CBS 128990) (Red band needle blight fungus).